A 241-amino-acid chain; its full sequence is Ribosome-recycling factor, mitochondrial (241 aa).

It belongs to the RRF family.

The protein localises to the mitochondrion. In terms of biological role, necessary for protein synthesis in mitochondria. Functions as a ribosome recycling factor in mitochondria. The protein is Ribosome-recycling factor, mitochondrial (RRF1) of Kluyveromyces lactis (strain ATCC 8585 / CBS 2359 / DSM 70799 / NBRC 1267 / NRRL Y-1140 / WM37) (Yeast).